A 424-amino-acid chain; its full sequence is GTPase Obg (424 aa).

One can recognise an Obg domain in the interval 1–159 (MVFIDTARIY…MWVRLELKLL (159 aa)). The region spanning 160 to 330 (ADVGLVGFPN…LLDKTIEILS (171 aa)) is the OBG-type G domain. GTP is bound by residues 166 to 173 (GFPNAGKS), 191 to 195 (FTTLT), 212 to 215 (DIPG), 282 to 285 (NKMD), and 311 to 313 (SAL). Mg(2+) contacts are provided by serine 173 and threonine 193. The OCT domain occupies 347 to 424 (NPPEEEETLE…VRDFEFEYYE (78 aa)).

It belongs to the TRAFAC class OBG-HflX-like GTPase superfamily. OBG GTPase family. Monomer. Mg(2+) serves as cofactor.

It localises to the cytoplasm. An essential GTPase which binds GTP, GDP and possibly (p)ppGpp with moderate affinity, with high nucleotide exchange rates and a fairly low GTP hydrolysis rate. Plays a role in control of the cell cycle, stress response, ribosome biogenesis and in those bacteria that undergo differentiation, in morphogenesis control. In Caldanaerobacter subterraneus subsp. tengcongensis (strain DSM 15242 / JCM 11007 / NBRC 100824 / MB4) (Thermoanaerobacter tengcongensis), this protein is GTPase Obg.